Reading from the N-terminus, the 131-residue chain is MSPDWLDTIHWNPDGLIPAIAQETGTGKVLMLAWMNRESLQRTLETGEAVYWSRSRQRLWHKGESSGNTQRVVQMRLDCDRDTLLLEVEQRGGIACHTGRHNCFYHRYQDGDWQVVEPVLKDPDQMYGDKT.

Asp-78 provides a ligand contact to Mg(2+). Cys-79 is a binding site for Zn(2+). 2 residues coordinate Mg(2+): Asp-80 and Asp-82. Zn(2+) contacts are provided by Cys-96 and Cys-103.

It belongs to the PRA-CH family. In terms of assembly, homodimer. Mg(2+) serves as cofactor. The cofactor is Zn(2+).

It localises to the cytoplasm. The catalysed reaction is 1-(5-phospho-beta-D-ribosyl)-5'-AMP + H2O = 1-(5-phospho-beta-D-ribosyl)-5-[(5-phospho-beta-D-ribosylamino)methylideneamino]imidazole-4-carboxamide. It functions in the pathway amino-acid biosynthesis; L-histidine biosynthesis; L-histidine from 5-phospho-alpha-D-ribose 1-diphosphate: step 3/9. Its function is as follows. Catalyzes the hydrolysis of the adenine ring of phosphoribosyl-AMP. The protein is Phosphoribosyl-AMP cyclohydrolase of Thioalkalivibrio sulfidiphilus (strain HL-EbGR7).